A 360-amino-acid polypeptide reads, in one-letter code: Archaemetzincin-2 (360 aa).

H254 contacts Zn(2+). The active-site Proton acceptor is the E255. H258, H264, C265, C270, C289, and C292 together coordinate Zn(2+).

The protein belongs to the peptidase M54 family. Zn(2+) serves as cofactor. As to expression, down-regulated in testis from patients with maturation arrest (MA) or Sertoli cell-only syndrome (SCOS).

In terms of biological role, probable zinc metalloprotease. This Homo sapiens (Human) protein is Archaemetzincin-2 (AMZ2).